Here is a 681-residue protein sequence, read N- to C-terminus: tRNA wybutosine-synthesizing protein 4 (681 aa).

Residues Met-1 to Ser-11 show a composition bias toward basic residues. The tract at residues Met-1 to Asp-21 is disordered. Residues Arg-66, Gly-92, Asp-119, Asn-165 to Leu-166, and Glu-193 each bind S-adenosyl-L-methionine.

It belongs to the methyltransferase superfamily. LCMT family.

It catalyses the reaction 7-[(3S)-3-amino-3-carboxypropyl]wyosine(37) in tRNA(Phe) + S-adenosyl-L-methionine = 7-[(3S)-(3-amino-3-methoxycarbonyl)propyl]wyosine(37) in tRNA(Phe) + S-adenosyl-L-homocysteine. The catalysed reaction is 7-[(3S)-(3-amino-3-methoxycarbonyl)propyl]wyosine(37) in tRNA(Phe) + S-adenosyl-L-methionine + CO2 = wybutosine(37) in tRNA(Phe) + S-adenosyl-L-homocysteine + 2 H(+). The protein operates within tRNA modification; wybutosine-tRNA(Phe) biosynthesis. In terms of biological role, probable S-adenosyl-L-methionine-dependent methyltransferase that acts as a component of the wybutosine biosynthesis pathway. Wybutosine is a hyper modified guanosine with a tricyclic base found at the 3'-position adjacent to the anticodon of eukaryotic phenylalanine tRNA. May methylate the carboxyl group of leucine residues to form alpha-leucine ester residues. The chain is tRNA wybutosine-synthesizing protein 4 (ppm2) from Schizosaccharomyces pombe (strain 972 / ATCC 24843) (Fission yeast).